Here is an 874-residue protein sequence, read N- to C-terminus: Coatomer subunit gamma-1 (874 aa).

Residues 1-11 show a composition bias toward basic and acidic residues; that stretch reads MLKKFDKKDEE. Positions 1–21 are disordered; the sequence is MLKKFDKKDEESGGGSNPLQH. HEAT repeat units follow at residues 64-101, 283-320, 322-355, and 356-392; these read TEATEAFFAMTKLFQSNDPTLRRMCYLTIKEMSCIAED, KELAPAVSVLQLFCSSPKAALRYAAVRTLNKVAMKHPS, VTACNLDLENLVTDSNRSIATLAITTLLKTGSES, and SIDRLMKQISSFMSEISDEFKVVVVQAISALCQKYPR. At Thr594 the chain carries Phosphothreonine. Positions 609–874 are interaction with ZNF289/ARFGAP2; that stretch reads RQEIFQEQLA…PVDIILASVG (266 aa).

The protein belongs to the COPG family. As to quaternary structure, oligomeric complex that consists of at least the alpha, beta, beta', gamma, delta, epsilon and zeta subunits. Interacts with ZNF289/ARFGAP2 through its C-terminal appendage domain. Interacts with EGFR upon EGF treatment; interaction is essential for regulation of EGF-dependent nuclear transport of EGFR by retrograde trafficking from the Golgi to the ER. The coatomer interacts with KDEL receptors; the interaction is important for retrograde trafficking of KDEL-bearing proteins from the Golgi to the endoplasmic reticulum. Interacts with COPB1. Interacts with TMED10 (via C-terminus). Interacts with TMED2, TMED3, TMED7 and TMED9.

It is found in the cytoplasm. Its subcellular location is the cytosol. It localises to the golgi apparatus membrane. The protein localises to the cytoplasmic vesicle. The protein resides in the COPI-coated vesicle membrane. Functionally, the coatomer is a cytosolic protein complex that binds to dilysine motifs and reversibly associates with Golgi non-clathrin-coated vesicles, which further mediate biosynthetic protein transport from the ER, via the Golgi up to the trans Golgi network. Coatomer complex is required for budding from Golgi membranes, and is essential for the retrograde Golgi-to-ER transport of dilysine-tagged proteins. In mammals, the coatomer can only be recruited by membranes associated to ADP-ribosylation factors (ARFs), which are small GTP-binding proteins; the complex also influences the Golgi structural integrity, as well as the processing, activity, and endocytic recycling of LDL receptors. Required for limiting lipid storage in lipid droplets. Involved in lipid homeostasis by regulating the presence of perilipin family members PLIN2 and PLIN3 at the lipid droplet surface and promoting the association of adipocyte triglyceride lipase (PNPLA2) with the lipid droplet surface to mediate lipolysis. The chain is Coatomer subunit gamma-1 (Copg1) from Mus musculus (Mouse).